Here is a 553-residue protein sequence, read N- to C-terminus: Dihydroxy-acid dehydratase (553 aa).

Aspartate 78 contacts Mg(2+). Cysteine 119 is a binding site for [2Fe-2S] cluster. Aspartate 120 and lysine 121 together coordinate Mg(2+). Lysine 121 carries the post-translational modification N6-carboxylysine. Cysteine 193 lines the [2Fe-2S] cluster pocket. Position 441 (glutamate 441) interacts with Mg(2+). Residue serine 467 is the Proton acceptor of the active site.

Belongs to the IlvD/Edd family. As to quaternary structure, homodimer. [2Fe-2S] cluster serves as cofactor. The cofactor is Mg(2+).

It carries out the reaction (2R)-2,3-dihydroxy-3-methylbutanoate = 3-methyl-2-oxobutanoate + H2O. The catalysed reaction is (2R,3R)-2,3-dihydroxy-3-methylpentanoate = (S)-3-methyl-2-oxopentanoate + H2O. It functions in the pathway amino-acid biosynthesis; L-isoleucine biosynthesis; L-isoleucine from 2-oxobutanoate: step 3/4. It participates in amino-acid biosynthesis; L-valine biosynthesis; L-valine from pyruvate: step 3/4. Its function is as follows. Functions in the biosynthesis of branched-chain amino acids. Catalyzes the dehydration of (2R,3R)-2,3-dihydroxy-3-methylpentanoate (2,3-dihydroxy-3-methylvalerate) into 2-oxo-3-methylpentanoate (2-oxo-3-methylvalerate) and of (2R)-2,3-dihydroxy-3-methylbutanoate (2,3-dihydroxyisovalerate) into 2-oxo-3-methylbutanoate (2-oxoisovalerate), the penultimate precursor to L-isoleucine and L-valine, respectively. This is Dihydroxy-acid dehydratase from Trichlorobacter lovleyi (strain ATCC BAA-1151 / DSM 17278 / SZ) (Geobacter lovleyi).